A 333-amino-acid chain; its full sequence is MEGEKLNLDNIISRLLEVRGSKPGKNVQLTESEIKGLCQKSREIFLSQPILLELEAPLKICGDVHGQYYDLLRLFEYGGFPPESNYLFLGDYVDRGKQSLETICLLLAYKIKYPENFFLLRGNHECASINRIYGFYDECKRRYNIKLWKTFTDCFNCLPVAAIIDEKIFCCHGGLSPDLQSMEQIRRIMRPTDVPDQGLLCDLLWSDPDKDVTGWGENDRGVSFTFGPEVVAKFLHKHDLDLICRAHQVVEDGYEFFAKRQLVTLFSAPNYCGEFDNAGSMMTVDETLMCSFQILKPADKKKYPYGAGGVGSNRPVTPPRNAPAAQPKKGAKK.

Residues Asp63, His65, Asp91, and Asn123 each coordinate Mn(2+). The active-site Proton donor is His124. Mn(2+) contacts are provided by His172 and His247. Residues 306-333 form a disordered region; it reads GAGGVGSNRPVTPPRNAPAAQPKKGAKK. The span at 322–333 shows a compositional bias: low complexity; that stretch reads APAAQPKKGAKK.

This sequence belongs to the PPP phosphatase family. PP-1 subfamily. In terms of assembly, interacts with lab-1; the interaction is direct. Interacts with knl-1; the interaction is direct. It depends on Mn(2+) as a cofactor.

The protein localises to the cytoplasm. Its subcellular location is the nucleus. The enzyme catalyses O-phospho-L-seryl-[protein] + H2O = L-seryl-[protein] + phosphate. It carries out the reaction O-phospho-L-threonyl-[protein] + H2O = L-threonyl-[protein] + phosphate. In terms of biological role, serine/threonine-protein phosphatase essential for chromosomal dynamics during meiosis and mitosis. Antagonizes the function of air-2 in the regulation of chromosome cohesion. Dephosphorylates histone H3 at 'Ser-10'. Also involved in the activation of chloride channel clh-3 during cell swelling and meiotic maturation. Essential for embryogenesis. The sequence is that of Serine/threonine-protein phosphatase PP1-beta (gsp-2) from Caenorhabditis briggsae.